A 354-amino-acid polypeptide reads, in one-letter code: DNA-binding protein EMBP-1 (354 aa).

Disordered stretches follow at residues 1 to 24 (MASS…TPAQ), 106 to 193 (SAAG…RSAS), and 230 to 273 (EVNA…RKQQ). Composition is skewed to low complexity over residues 127-140 (SSSG…QGSS) and 232-245 (NAAA…SLSQ). Residues 246-265 (MDERELKRERRKQSNRESAR) are compositionally biased toward basic and acidic residues. Positions 250-313 (ELKRERRKQS…KTMETENKKL (64 aa)) constitute a bZIP domain. The basic motif stretch occupies residues 252-271 (KRERRKQSNRESARRSRLRK). A leucine-zipper region spans residues 278-299 (LAQKVSELTAANGTLRSELDQL).

The protein belongs to the bZIP family. In terms of assembly, heterodimer.

The protein resides in the nucleus. Its function is as follows. Interacts specifically with the 8-bp sequence 5'-CACGTGGC-3'in the abscisic acid response element (ABARE). Also binds to the hexamer motif 5'-ACGTCA-3' of histone gene promoters. This chain is DNA-binding protein EMBP-1, found in Triticum aestivum (Wheat).